A 1337-amino-acid chain; its full sequence is Receptor-type tyrosine-protein phosphatase eta (1337 aa).

The N-terminal stretch at 1–35 (MKPAAREARLPPRSPGLRWALPLLLLLLRLGQILC) is a signal peptide. Topologically, residues 36–975 (AGGTPSPIPD…LPQDPGVICG (940 aa)) are extracellular. Polar residues-rich tracts occupy residues 67-82 (SFHK…VETN) and 89-119 (SSGA…STGP). The segment at 67–124 (SFHKQNGTGTPQVETNTSEDGESSGANDSLRTPEQGSNGTDGASQKTPSSTGPSPVFD) is disordered. Residues Asn72, Asn82, Asn93, Asn104, Asn142, Asn172, Asn192, Asn231, Asn258, Asn278, Asn342, Asn351, Asn376, Asn391, Asn396, Asn413, Asn431, Asn501, Asn525, Asn536, Asn582, Asn603, Asn618, Asn628, Asn637, Asn666, Asn669, Asn761, Asn772, Asn784, Asn790, Asn824, Asn910, and Asn937 are each glycosylated (N-linked (GlcNAc...) asparagine). 9 consecutive Fibronectin type-III domains span residues 121 to 209 (PVFD…EPIP), 207 to 291 (PIPV…EGGL), 271 to 364 (NPYL…EFRT), 368 to 456 (QVFD…PPVP), 457 to 541 (VSDF…TVPS), 542 to 623 (AVFD…TAQY), 625 to 720 (RPSN…TDPA), 721 to 817 (SMAS…TDPP), and 816 to 902 (PPPP…SEVL). Residues 278–327 (NKTKGDPLGTEGGLDASNTERSRAGSPTAPVHDESLVGPVDPSSGQQSRD) form a disordered region. Residues 976 to 996 (AVFGCIFGALVIVTVGGFIFW) form a helical membrane-spanning segment. Residues 997-1337 (RKKRKDAKNN…TFGKTNGYIA (341 aa)) lie on the Cytoplasmic side of the membrane. Ser1009 carries the post-translational modification Phosphoserine. One can recognise a Tyrosine-protein phosphatase domain in the interval 1041–1298 (FAEEYEDLKL…VFLNQCVLDI (258 aa)). Substrate is bound by residues Asp1205, 1239 to 1245 (CSAGVGR), and Gln1283. The Phosphocysteine intermediate role is filled by Cys1239.

It belongs to the protein-tyrosine phosphatase family. Receptor class 3 subfamily. In terms of assembly, monomer. Interacts with CTNNB1 (phosphorylated) and JUP (phosphorylated). Interacts with FLT3 (phosphorylated). Interacts with GAB1 and GRB2. Post-translationally, N- and O-glycosylated. In terms of processing, N-glycosylated. As to expression, expressed in the promyelocytic cell line HL-60, the granulocyte-macrophage colony-stimulating factor-dependent leukemic cell line F-36P, and the IL3 and erythropoietin-dependent leukemic cell line F-36E. Expressed predominantly in epithelial cells and lymphocytes. Enhanced expression at high cell density. Expressed in the brain.

Its subcellular location is the cell membrane. It is found in the cell projection. It localises to the ruffle membrane. The protein localises to the cell junction. The protein resides in the secreted. Its subcellular location is the extracellular space. It catalyses the reaction O-phospho-L-tyrosyl-[protein] + H2O = L-tyrosyl-[protein] + phosphate. Functionally, tyrosine phosphatase which dephosphorylates or contributes to the dephosphorylation of CTNND1, FLT3, PDGFRB, MET, KDR, LYN, SRC, MAPK1, MAPK3, EGFR, TJP1, OCLN, PIK3R1 and PIK3R2. Plays a role in cell adhesion, migration, proliferation and differentiation. Has a role in megakaryocytes and platelet formation. Involved in vascular development. Regulator of macrophage adhesion and spreading. Positively affects cell-matrix adhesion. Positive regulator of platelet activation and thrombosis. Negative regulator of cell proliferation. Negative regulator of PDGF-stimulated cell migration; through dephosphorylation of PDGFR. Positive regulator of endothelial cell survival, as well as of VEGF-induced SRC and AKT activation; through KDR dephosphorylation. Negative regulator of EGFR signaling pathway; through EGFR dephosphorylation. Enhances the barrier function of epithelial junctions during reassembly. Negatively regulates T-cell receptor (TCR) signaling. Upon T-cell TCR activation, it is up-regulated and excluded from the immunological synapses, while upon T-cell-antigen presenting cells (APC) disengagement, it is no longer excluded and can dephosphorylate PLCG1 and LAT to down-regulate prolongation of signaling. Activates angiogenesis and cell migration. Downregulates the expression of the endothelial adhesion molecules ICAM1 and VCAM1. The polypeptide is Receptor-type tyrosine-protein phosphatase eta (PTPRJ) (Homo sapiens (Human)).